We begin with the raw amino-acid sequence, 729 residues long: Fatty acid oxidation complex subunit alpha (729 aa).

Residues 1–189 (MLYKGDTLYL…KIGLVDGVVK (189 aa)) form an enoyl-CoA hydratase/isomerase region. Asp296 lines the substrate pocket. The interval 311-729 (ETPKQAAVLG…ARAVGDLKTA (419 aa)) is 3-hydroxyacyl-CoA dehydrogenase. NAD(+) is bound by residues Met324, Asp343, 400 to 402 (VVE), Lys407, and Ser429. The active-site For 3-hydroxyacyl-CoA dehydrogenase activity is the His450. Asn453 lines the NAD(+) pocket. Substrate-binding residues include Asn500 and Tyr660.

This sequence in the N-terminal section; belongs to the enoyl-CoA hydratase/isomerase family. The protein in the C-terminal section; belongs to the 3-hydroxyacyl-CoA dehydrogenase family. In terms of assembly, heterotetramer of two alpha chains (FadB) and two beta chains (FadA).

It carries out the reaction a (3S)-3-hydroxyacyl-CoA + NAD(+) = a 3-oxoacyl-CoA + NADH + H(+). The catalysed reaction is a (3S)-3-hydroxyacyl-CoA = a (2E)-enoyl-CoA + H2O. It catalyses the reaction a 4-saturated-(3S)-3-hydroxyacyl-CoA = a (3E)-enoyl-CoA + H2O. The enzyme catalyses (3S)-3-hydroxybutanoyl-CoA = (3R)-3-hydroxybutanoyl-CoA. It carries out the reaction a (3Z)-enoyl-CoA = a 4-saturated (2E)-enoyl-CoA. The catalysed reaction is a (3E)-enoyl-CoA = a 4-saturated (2E)-enoyl-CoA. It participates in lipid metabolism; fatty acid beta-oxidation. Involved in the aerobic and anaerobic degradation of long-chain fatty acids via beta-oxidation cycle. Catalyzes the formation of 3-oxoacyl-CoA from enoyl-CoA via L-3-hydroxyacyl-CoA. It can also use D-3-hydroxyacyl-CoA and cis-3-enoyl-CoA as substrate. The protein is Fatty acid oxidation complex subunit alpha of Escherichia fergusonii (strain ATCC 35469 / DSM 13698 / CCUG 18766 / IAM 14443 / JCM 21226 / LMG 7866 / NBRC 102419 / NCTC 12128 / CDC 0568-73).